The chain runs to 231 residues: CLAVATA3/ESR (CLE)-related protein 4B-2 (231 aa).

The first 21 residues, 1-21 (MATNTMLCLLILSVVLALAFA), serve as a signal peptide directing secretion. Positions 21-83 (ATNKKGDEEP…SNQLPNNNWM (63 aa)) are required for secretion from the host cytoplasm to the host apoplasm. N-linked (GlcNAc...) asparagine glycosylation occurs at asparagine 32. The tract at residues 116–231 (RKTGMHSQRH…APAGPDPIHH (116 aa)) is disordered. Basic and acidic residues-rich tracts occupy residues 125–137 (HHEE…EKRV) and 144–221 (PIHH…EKRG). The stretch at 127–135 (EETTLEQEK) is one A-1 repeat. The segment at 127-219 (EETTLEQEKR…HEETTFEQEK (93 aa)) is 5 X approximate repeat A. Residues 136 to 147 (RVAGAGPDPIHH) form a CLE-1 repeat. A 5 X approximate repeat CLE region spans residues 136-231 (RVAGAGPDPI…APAGPDPIHH (96 aa)). The A-2 repeat unit spans residues 148–156 (EETTLEQEK). The stretch at 157-168 (RAVPAGPDPKHH) is one CLE-2 repeat. The A-3 repeat unit spans residues 169–177 (EETTLEQEK). Residues 178–189 (RAVPAGPDPKHH) form a CLE-3 repeat. The A-4 repeat unit spans residues 190-198 (EETTLEQEK). Residues 199–210 (RAVPAGPDPKHH) form a CLE-4 repeat. The stretch at 211–219 (EETTFEQEK) is one A-5 repeat. One copy of the CLE-5 repeat lies at 220–231 (RGAPAGPDPIHH).

Belongs to the CLV3/ESR signal peptide family. As to expression, highly expressed exclusively within the dorsal esophageal gland cell during syncytium formation in host plants.

It is found in the secreted. Its subcellular location is the host cytoplasm. The protein localises to the host extracellular space. It localises to the extracellular space. The protein resides in the apoplast. In terms of biological role, mimics host plant CLE extracellular signal peptides that regulate cell fate. May play a role in the differentiation or division of feeding cells (syncytia) induced in plant roots during infection. The polypeptide is CLAVATA3/ESR (CLE)-related protein 4B-2 (CLE-4B-2) (Globodera rostochiensis (Golden nematode worm)).